A 1047-amino-acid chain; its full sequence is MTAELQAASGGPGGLEADCQVLNKMKEITGIQDADFLHAALKAAKGNLMEALIVLTEERDQEPVQNTAAAEPSSWEGSAVGKEPPQGGAAFDPEKKGDVHSAVAYGQLESPKAHAAERPQEVHSPEHKNRSKRKRCEVWGENSKQSDWKRVGDWPVGMKNIGNTCWFSAVIQSLFQLPQFRRLVLSYSFPPNVLESCRTRTGKRNIAFMQELQCLFALMLGTRRKFVDPSAALELLRDAFKSTEEQQQDVSEFTHKLLDWLEDAFQLAVNVRSPGDKSENPMVQLFYGTFLTEGVHEGNTFSKIETFGQYPLQVNGYRNLNECLEGAMVEGEMDEETATQSVKYVQERWFTKLPPVLTFELSRFEFNQSLGQPEKIHTKLEFPQTIFMDRYLYCSKELIQTKREEMKKLKEKMLVLQQKLERYMKYGSGPARFPLPDMLQYVLEFITTKPAGAVSSACVSSTEDSQMMDRQSQGESLILGTPSQPDSMLDGKDGKPEDEAVLLANSSPQQQLNAPLQPSEPPAEMSDCPAPHVVSEEEMNLVTTCLQRWRNEIEQDVRDLKESIARVSLSIDEMYSDPHLQQVPYHLHAVLVHEGQANAGHYWAFIYDQPRKSWLKYNDISVTESSWEELERDSFGGLRNASAYCLMYISDKVSHVVAGEGDGSEVGQFQKEVEALPPELRRYIQEDNWRLEQEAEEWEEEQSCKIPSTASESQELSPESGLDPPAAHEQSLRSLSSEHAMIAKEQTAKAIANAANVYEKNGVEAALCEAFHEEYSRLYLLSKETPTPQNDARLQHVLVYFLQNDAPQQIVERTLLEQFADKNLSYDERSISIMKVARDKLKEIGPDEVNMEEYKKWHEDYSLFRKVSVYLLTGLELYQNRKYKESLTYLIYAYQSNTTLLKKGANRGVNESLITLYRRKCLLKLNEVASSLFVSCEEAHVAEGISILNELIIPCMHLINNFDISREDMDAIEVMRNRWCSYLGREDMDASLQIRLGELLPRLLDGSTEVVVLKEPPKIRPNSPYDLCSRFAAVMESIHDASTVTVK.

Disordered stretches follow at residues 60-95 (DQEP…DPEK) and 110-138 (SPKA…RCEV). In terms of domain architecture, UIM spans 94 to 113 (EKKGDVHSAVAYGQLESPKA). A compositionally biased stretch (basic and acidic residues) spans 111 to 128 (PKAHAAERPQEVHSPEHK). Residues 156–651 (VGMKNIGNTC…SAYCLMYISD (496 aa)) form the USP domain. C165 serves as the catalytic Nucleophile. The span at 461-486 (STEDSQMMDRQSQGESLILGTPSQPD) shows a compositional bias: polar residues. A disordered region spans residues 461–528 (STEDSQMMDR…SEPPAEMSDC (68 aa)). The segment covering 489 to 498 (LDGKDGKPED) has biased composition (basic and acidic residues). The segment covering 504–516 (ANSSPQQQLNAPL) has biased composition (polar residues). Residue H601 is the Proton acceptor of the active site. A disordered region spans residues 694–735 (EAEEWEEEQSCKIPSTASESQELSPESGLDPPAAHEQSLRSL). Residues 705-717 (KIPSTASESQELS) are compositionally biased toward polar residues.

The protein belongs to the peptidase C19 family. USP28 subfamily.

The protein resides in the nucleus. Its subcellular location is the nucleoplasm. It catalyses the reaction Thiol-dependent hydrolysis of ester, thioester, amide, peptide and isopeptide bonds formed by the C-terminal Gly of ubiquitin (a 76-residue protein attached to proteins as an intracellular targeting signal).. Its function is as follows. Deubiquitinase involved in DNA damage response checkpoint and MYC proto-oncogene stability. Involved in DNA damage induced apoptosis by specifically deubiquitinating proteins of the DNA damage pathway such as CLSPN. Also involved in G2 DNA damage checkpoint, by deubiquitinating CLSPN, and preventing its degradation by the anaphase promoting complex/cyclosome (APC/C). Specifically deubiquitinates MYC in the nucleoplasm, leading to prevent MYC degradation by the proteasome. Deubiquitinates ZNF304, hence may prevent ZNF304 degradation by the proteasome, leading to the activated KRAS-mediated promoter hypermethylation and transcriptional silencing of tumor suppressor genes (TSGs). This Gallus gallus (Chicken) protein is Ubiquitin carboxyl-terminal hydrolase 28 (USP28).